Consider the following 419-residue polypeptide: UDP-N-acetylglucosamine 1-carboxyvinyltransferase (419 aa).

22–23 (KN) is a phosphoenolpyruvate binding site. Arg-93 provides a ligand contact to UDP-N-acetyl-alpha-D-glucosamine. The active-site Proton donor is the Cys-117. Cys-117 is subject to 2-(S-cysteinyl)pyruvic acid O-phosphothioketal. Residues Asp-307 and Ile-329 each contribute to the UDP-N-acetyl-alpha-D-glucosamine site.

It belongs to the EPSP synthase family. MurA subfamily.

It localises to the cytoplasm. It catalyses the reaction phosphoenolpyruvate + UDP-N-acetyl-alpha-D-glucosamine = UDP-N-acetyl-3-O-(1-carboxyvinyl)-alpha-D-glucosamine + phosphate. The protein operates within cell wall biogenesis; peptidoglycan biosynthesis. Its function is as follows. Cell wall formation. Adds enolpyruvyl to UDP-N-acetylglucosamine. The protein is UDP-N-acetylglucosamine 1-carboxyvinyltransferase of Pseudoalteromonas atlantica (strain T6c / ATCC BAA-1087).